A 48-amino-acid chain; its full sequence is Bacteriocin plantaricin-A (48 aa).

Residues 1–25 (MKIQIKGMKQLSNKEMQKIVGGKSS) constitute a propeptide that is removed on maturation.

As to quaternary structure, active plantaricin A is composed of an alpha chain and a beta chain.

This heat stable bacteriocin inhibits the growth of closely related Lactobacillus species. It may act as a pore-forming protein, creating a channel in the cell membrane through a 'barrel stave' mechanism. The protein is Bacteriocin plantaricin-A (plnA) of Lactiplantibacillus plantarum (strain ATCC BAA-793 / NCIMB 8826 / WCFS1) (Lactobacillus plantarum).